Here is a 1108-residue protein sequence, read N- to C-terminus: AP-3 complex subunit beta (1108 aa).

HEAT repeat units lie at residues 90-127 (DSAL…IDII), 327-363 (IEAQ…LRPS), 397-433 (ENIG…STVP), and 434-471 (DVTE…LNAT). Positions 480-490 (KEKEKEKDVKE) are enriched in basic and acidic residues. Disordered regions lie at residues 480–501 (KEKE…HSSS), 736–797 (DEEE…YDGE), and 811–835 (LFGI…GEEE). 2 stretches are compositionally biased toward acidic residues: residues 736-764 (DEEE…EDFF) and 780-797 (YDED…YDGE).

This sequence belongs to the adaptor complexes large subunit family. As to quaternary structure, adaptor protein complex 3 (AP-3) is a heterotetramer composed of two large adaptins (delta-type subunit and beta-type subunit), a medium adaptin (mu-type subunit) and a small adaptin (sigma-type subunit).

It localises to the endosome membrane. Its function is as follows. Part of the AP-3 complex, an adaptor-related complex which is essential for the compartmentalization of the endocytic pathway. The sequence is that of AP-3 complex subunit beta (ap3b-1) from Dictyostelium discoideum (Social amoeba).